A 344-amino-acid polypeptide reads, in one-letter code: L-lactate dehydrogenase B (344 aa).

NAD(+) contacts are provided by residues 62 to 67 and Arg-109; that span reads DALPDK. Substrate is bound by residues Arg-116, Asn-148, and Arg-179. Asn-148 serves as a coordination point for NAD(+). His-203 (proton acceptor) is an active-site residue. Thr-258 is a binding site for substrate.

Belongs to the LDH/MDH superfamily. LDH family. In terms of assembly, tetramer that arise from random association of LDH-A and LDH-B.

It catalyses the reaction (S)-lactate + NAD(+) = pyruvate + NADH + H(+). It participates in fermentation; pyruvate fermentation to lactate; (S)-lactate from pyruvate: step 1/1. The protein is L-lactate dehydrogenase B of Hordeum vulgare (Barley).